Consider the following 179-residue polypeptide: NADH-quinone oxidoreductase subunit I (179 aa).

2 consecutive 4Fe-4S ferredoxin-type domains span residues 49–79 and 89–118; these read LTRD…LQKG and EFFR…LTPD. [4Fe-4S] cluster-binding residues include Cys-59, Cys-62, Cys-65, Cys-69, Cys-98, Cys-101, Cys-104, and Cys-108.

This sequence belongs to the complex I 23 kDa subunit family. As to quaternary structure, NDH-1 is composed of 14 different subunits. Subunits NuoA, H, J, K, L, M, N constitute the membrane sector of the complex. The cofactor is [4Fe-4S] cluster.

It is found in the cell inner membrane. It catalyses the reaction a quinone + NADH + 5 H(+)(in) = a quinol + NAD(+) + 4 H(+)(out). Functionally, NDH-1 shuttles electrons from NADH, via FMN and iron-sulfur (Fe-S) centers, to quinones in the respiratory chain. The immediate electron acceptor for the enzyme in this species is believed to be ubiquinone. Couples the redox reaction to proton translocation (for every two electrons transferred, four hydrogen ions are translocated across the cytoplasmic membrane), and thus conserves the redox energy in a proton gradient. The protein is NADH-quinone oxidoreductase subunit I of Chromohalobacter salexigens (strain ATCC BAA-138 / DSM 3043 / CIP 106854 / NCIMB 13768 / 1H11).